We begin with the raw amino-acid sequence, 254 residues long: 5-oxoprolinase subunit A (254 aa).

The protein belongs to the LamB/PxpA family. Forms a complex composed of PxpA, PxpB and PxpC.

It carries out the reaction 5-oxo-L-proline + ATP + 2 H2O = L-glutamate + ADP + phosphate + H(+). In terms of biological role, catalyzes the cleavage of 5-oxoproline to form L-glutamate coupled to the hydrolysis of ATP to ADP and inorganic phosphate. In Acinetobacter baumannii (strain ACICU), this protein is 5-oxoprolinase subunit A.